A 117-amino-acid chain; its full sequence is Fluoride-specific ion channel FluC 2 (117 aa).

2 helical membrane-spanning segments follow: residues 1 to 21 (MISIILVMIGGGLGAIARSAI) and 46 to 66 (FLIGLTIGLSISISWFPAFFV). Na(+) is bound by residues Gly-71 and Thr-74. Residues 95-115 (LFLNYSLLQFIIGFIACYIGY) form a helical membrane-spanning segment.

Belongs to the fluoride channel Fluc/FEX (TC 1.A.43) family.

Its subcellular location is the cell membrane. The enzyme catalyses fluoride(in) = fluoride(out). With respect to regulation, na(+) is not transported, but it plays an essential structural role and its presence is essential for fluoride channel function. Its function is as follows. Fluoride-specific ion channel. Important for reducing fluoride concentration in the cell, thus reducing its toxicity. In Staphylococcus aureus (strain MRSA252), this protein is Fluoride-specific ion channel FluC 2.